The primary structure comprises 629 residues: MAFEALTGVNGDLVTISWMASKGANQTEHYLKEEVGGTVFFAFRASFSSEDLFATENTSPFGEIKMKRNQFPCMRSIGNDVDTTVNEAFLKSLEVLIGPRTSFHASVQSAVDRKQQVVFTGHSFGGATAILATVWYLETYFIRDAYAAPEPRCVTFGAPLVGDYIFKHALGRENWSRFFVNFVTRFDIVPRIMLARKTTIEQTLSYVLGKLDSTRAPIHESDQVITEFYTRVMRDTYTVASKAVCQLIGNGEAFLETLSSFYELSPYRPVGTFVFSTQKRLVVVNNSDAILQMLFYTCQSNDEQELSVIPFLSIRDHHGYEELVQSIGIKLLNHLDLHNPLLDGENSIGSALDDLGMSTRARQCIHAALEAEKQRVENQKKIETKRDQIVERLTWIVEVYKPKCQAHKNGYYDSFKDSNEENDFKANVKRVELAGIFDEVLGLVKKGQLPDGFEGSRGWINLATQYRRLIEPLDISNYHGQLKNEDTGPYMLHGRPSRYKYAQRGYEHDILKPTGMIAKDVFWSKVNGLNLGLQQDIQEILKNSGSECGSCFWAEVEELKGKPYEEVQVRFKTLEGLLEGWIKDGEVDEKEIFLEGSTFRKWWNTLPDSHKIHAPLYPRERMMDETRAT.

Ser123 functions as the Nucleophile in the catalytic mechanism. Residues Asp187 and His317 each act as charge relay system in the active site.

In terms of assembly, interacts (via N-terminus) with PAD4 and SAG101. Part of a nuclear complex made of EDS1, PAD4 and SAG101, that can be redirected to the cytoplasm in the presence of an extranuclear form of EDS1. Does not interact with itself or with EDS1.

It is found in the nucleus. The protein localises to the cytoplasm. In terms of biological role, acts as a second functional copy of EDS1. Can mediate HRT-mediated resistance to turnip crinkle virus. This chain is Protein EDS1B (EDS1B), found in Arabidopsis thaliana (Mouse-ear cress).